The following is a 362-amino-acid chain: MNTFGTRLKFTSFGESHGVAVGCIIDGMPAGVKFDEEFLQNELDKRKGGSKFATPRKESDKAQVLSGVFEGYTTGHPIAIVVFNENAHSKDYDNLKDLFRPAHADFTYFYKYGIRDHRGGGRSSARESVARVAGGAVAAMLLREFDICVQSGVFGVGTFVSNLKEEEFDFEFAKKSEIFCLDPKLESDFKNEILNARNSKDSVGAAVFTKVSGMLIGLGEVLYDKLDSKLAHALMGINAVKAVEIGEGINASKMRGSCNNDALKDGKFLSNHSGGILGGISNGENLILKTYFKPTPSIFAKQESIDKFGNNLKFELKGRHDPCVGVRGSVVASAMVRLVLADCLLLNASANLNNLKNAYGLK.

Arg46 serves as a coordination point for NADP(+). Residues 122-124, 238-239, Gly278, 293-297, and Arg319 contribute to the FMN site; these read RSS, NA, and KPTPS.

It belongs to the chorismate synthase family. As to quaternary structure, homotetramer. FMNH2 is required as a cofactor.

It carries out the reaction 5-O-(1-carboxyvinyl)-3-phosphoshikimate = chorismate + phosphate. It participates in metabolic intermediate biosynthesis; chorismate biosynthesis; chorismate from D-erythrose 4-phosphate and phosphoenolpyruvate: step 7/7. Its function is as follows. Catalyzes the anti-1,4-elimination of the C-3 phosphate and the C-6 proR hydrogen from 5-enolpyruvylshikimate-3-phosphate (EPSP) to yield chorismate, which is the branch point compound that serves as the starting substrate for the three terminal pathways of aromatic amino acid biosynthesis. This reaction introduces a second double bond into the aromatic ring system. The sequence is that of Chorismate synthase from Campylobacter jejuni subsp. jejuni serotype O:2 (strain ATCC 700819 / NCTC 11168).